The chain runs to 382 residues: Low-specificity L-threonine aldolase (382 aa).

Lys214 is modified (N6-(pyridoxal phosphate)lysine).

It belongs to the threonine aldolase family. Homotetramer. The cofactor is pyridoxal 5'-phosphate.

It carries out the reaction L-threonine = acetaldehyde + glycine. The enzyme catalyses L-allo-threonine = acetaldehyde + glycine. It functions in the pathway amino-acid degradation; L-threonine degradation via aldolase pathway; acetaldehyde and glycine from L-threonine: step 1/1. The sequence is that of Low-specificity L-threonine aldolase (GLY1) from Eremothecium gossypii (strain ATCC 10895 / CBS 109.51 / FGSC 9923 / NRRL Y-1056) (Yeast).